Here is a 248-residue protein sequence, read N- to C-terminus: Leucyl/phenylalanyl-tRNA--protein transferase (248 aa).

The protein belongs to the L/F-transferase family.

The protein resides in the cytoplasm. It carries out the reaction N-terminal L-lysyl-[protein] + L-leucyl-tRNA(Leu) = N-terminal L-leucyl-L-lysyl-[protein] + tRNA(Leu) + H(+). It catalyses the reaction N-terminal L-arginyl-[protein] + L-leucyl-tRNA(Leu) = N-terminal L-leucyl-L-arginyl-[protein] + tRNA(Leu) + H(+). The enzyme catalyses L-phenylalanyl-tRNA(Phe) + an N-terminal L-alpha-aminoacyl-[protein] = an N-terminal L-phenylalanyl-L-alpha-aminoacyl-[protein] + tRNA(Phe). Functions in the N-end rule pathway of protein degradation where it conjugates Leu, Phe and, less efficiently, Met from aminoacyl-tRNAs to the N-termini of proteins containing an N-terminal arginine or lysine. This Oleidesulfovibrio alaskensis (strain ATCC BAA-1058 / DSM 17464 / G20) (Desulfovibrio alaskensis) protein is Leucyl/phenylalanyl-tRNA--protein transferase.